The chain runs to 196 residues: Alpha-crystallin A chain (196 aa).

N-acetylmethionine is present on methionine 1. The interval 1–63 is required for complex formation with BFSP1 and BFSP2; that stretch reads MDVTIQHPWF…RTVLDSGISE (63 aa). Glutamine 6 is modified (deamidated glutamine; partial). The residue at position 45 (serine 45) is a Phosphoserine. At glutamine 50 the chain carries Deamidated glutamine; partial. The sHSP domain maps to 76 to 185; it reads HAGNPKNNPI…GHSERAIPVS (110 aa). N6-acetyllysine occurs at positions 93 and 122. A Zn(2+)-binding site is contributed by histidine 123. Position 124 is a deamidated asparagine; partial (asparagine 124). Zn(2+)-binding residues include glutamate 125 and histidine 130. Phosphoserine is present on serine 145. Asparagine 146 carries the deamidated asparagine; partial modification. Residues 168 to 196 are disordered; the sequence is KVQSGLDAGHSERAIPVSREEKPSSAPSS. The residue at position 170 (glutamine 170) is a Deamidated glutamine; partial. Basic and acidic residues predominate over residues 176 to 190; it reads GHSERAIPVSREEKP. Position 177 (histidine 177) interacts with Zn(2+). Serine 185 carries an O-linked (GlcNAc) serine glycan.

This sequence belongs to the small heat shock protein (HSP20) family. In terms of assembly, heteromer composed of three CRYAA and one CRYAB subunits. Inter-subunit bridging via zinc ions enhances stability, which is crucial as there is no protein turn over in the lens. Can also form homodimers and homotetramers (dimers of dimers) which serve as the building blocks of homooligomers. Within homooligomers, the zinc-binding motif is created from residues of 3 different molecules. His-123 and Glu-125 from one molecule are ligands of the zinc ion, and His-130 and His-177 residues from additional molecules complete the site with tetrahedral coordination geometry. Part of a complex required for lens intermediate filament formation composed of BFSP1, BFSP2 and CRYAA. In terms of processing, acetylation at Lys-93 may increase chaperone activity. Undergoes age-dependent proteolytical cleavage at the C-terminus.

Its subcellular location is the cytoplasm. It is found in the nucleus. In terms of biological role, contributes to the transparency and refractive index of the lens. Acts as a chaperone, preventing aggregation of various proteins under a wide range of stress conditions. Required for the correct formation of lens intermediate filaments as part of a complex composed of BFSP1, BFSP2 and CRYAA. This chain is Alpha-crystallin A chain (CRYAA), found in Mesocricetus auratus (Golden hamster).